Consider the following 405-residue polypeptide: S-adenosylmethionine synthase (405 aa).

Residue 141–146 participates in ATP binding; that stretch reads GQGSVD.

Belongs to the AdoMet synthase 2 family. Requires Mg(2+) as cofactor.

The enzyme catalyses L-methionine + ATP + H2O = S-adenosyl-L-methionine + phosphate + diphosphate. It functions in the pathway amino-acid biosynthesis; S-adenosyl-L-methionine biosynthesis; S-adenosyl-L-methionine from L-methionine: step 1/1. Functionally, catalyzes the formation of S-adenosylmethionine from methionine and ATP. The chain is S-adenosylmethionine synthase from Methanococcus maripaludis (strain C6 / ATCC BAA-1332).